Here is a 169-residue protein sequence, read N- to C-terminus: UPF0725 protein At2g19200 (169 aa).

This sequence belongs to the UPF0725 (EMB2204) family.

This is UPF0725 protein At2g19200 from Arabidopsis thaliana (Mouse-ear cress).